Reading from the N-terminus, the 237-residue chain is Ribonuclease PH (237 aa).

Residues R86 and 124–126 (GTR) each bind phosphate.

The protein belongs to the RNase PH family. In terms of assembly, homohexameric ring arranged as a trimer of dimers.

It carries out the reaction tRNA(n+1) + phosphate = tRNA(n) + a ribonucleoside 5'-diphosphate. In terms of biological role, phosphorolytic 3'-5' exoribonuclease that plays an important role in tRNA 3'-end maturation. Removes nucleotide residues following the 3'-CCA terminus of tRNAs; can also add nucleotides to the ends of RNA molecules by using nucleoside diphosphates as substrates, but this may not be physiologically important. Probably plays a role in initiation of 16S rRNA degradation (leading to ribosome degradation) during starvation. This chain is Ribonuclease PH, found in Methylocella silvestris (strain DSM 15510 / CIP 108128 / LMG 27833 / NCIMB 13906 / BL2).